A 374-amino-acid chain; its full sequence is MRPSRALIDLDALRHNIRLLNSIAHNARCAAVIKADAYGHGAVEIARALKGEAPKLAVACYDEAVSLREAGVTTPLLVLEGFYSSEELADSTRWCDIEWVVHDMEQLDMLSEVAPLRKAGPDSTRMQTWIKLNTGMNRLGLPLNKLAHVAEKLQQFPGLSVIGLMTHFACADELDSLLQQRQWRAFQAGMQAAGANGWSYSSANSAALLQYPETHLDWVRPGIAMYGASPMADKTGADFGLKPVMTFESRLIATRELQAGDSIGYGAAWTADAPTRMGVVAVGYGDGYPRQMQNGAPVAVCGKRTKIIGRVSMDMLTVDISHIPEARIGSEVELWGGTVSADEVAGYASTISYTLFTGMTSRVPRVYINRSEVV.

Catalysis depends on Lys-34, which acts as the Proton acceptor; specific for D-alanine. Position 34 is an N6-(pyridoxal phosphate)lysine (Lys-34). Arg-138 is a binding site for substrate. Tyr-265 (proton acceptor; specific for L-alanine) is an active-site residue. Met-313 contributes to the substrate binding site.

This sequence belongs to the alanine racemase family. The cofactor is pyridoxal 5'-phosphate.

The catalysed reaction is L-alanine = D-alanine. Its pathway is amino-acid biosynthesis; D-alanine biosynthesis; D-alanine from L-alanine: step 1/1. Functionally, catalyzes the interconversion of L-alanine and D-alanine. May also act on other amino acids. This Hahella chejuensis (strain KCTC 2396) protein is Alanine racemase (alr).